A 230-amino-acid polypeptide reads, in one-letter code: Phosphoenolpyruvate guanylyltransferase (230 aa).

Phosphoenolpyruvate is bound by residues Thr-139, Gly-155, and Ser-158.

Belongs to the CofC family.

The enzyme catalyses phosphoenolpyruvate + GTP + H(+) = enolpyruvoyl-2-diphospho-5'-guanosine + diphosphate. It functions in the pathway cofactor biosynthesis; coenzyme F420 biosynthesis. Its function is as follows. Guanylyltransferase that catalyzes the activation of phosphoenolpyruvate (PEP) as enolpyruvoyl-2-diphospho-5'-guanosine, via the condensation of PEP with GTP. It is involved in the biosynthesis of coenzyme F420, a hydride carrier cofactor. This chain is Phosphoenolpyruvate guanylyltransferase, found in Thermobaculum terrenum (strain ATCC BAA-798 / CCMEE 7001 / YNP1).